The following is a 70-amino-acid chain: Putative defensin-like protein 73 (70 aa).

A signal peptide spans 1–29 (MNCKIEFMSFLVMTSIVILFLFVSGKVEA). Cystine bridges form between C33–C68, C37–C57, C43–C66, and C47–C67.

The protein belongs to the DEFL family.

The protein resides in the secreted. In Arabidopsis thaliana (Mouse-ear cress), this protein is Putative defensin-like protein 73 (LCR44).